A 186-amino-acid polypeptide reads, in one-letter code: Orotate phosphoribosyltransferase (186 aa).

Residues Arg-96, Lys-100, His-102, and 121-129 (DDVATTGTS) contribute to the 5-phospho-alpha-D-ribose 1-diphosphate site. Orotate contacts are provided by Thr-125 and Arg-153.

It belongs to the purine/pyrimidine phosphoribosyltransferase family. PyrE subfamily. Homodimer. It depends on Mg(2+) as a cofactor.

The catalysed reaction is orotidine 5'-phosphate + diphosphate = orotate + 5-phospho-alpha-D-ribose 1-diphosphate. It functions in the pathway pyrimidine metabolism; UMP biosynthesis via de novo pathway; UMP from orotate: step 1/2. Its function is as follows. Catalyzes the transfer of a ribosyl phosphate group from 5-phosphoribose 1-diphosphate to orotate, leading to the formation of orotidine monophosphate (OMP). This chain is Orotate phosphoribosyltransferase, found in Aeropyrum pernix (strain ATCC 700893 / DSM 11879 / JCM 9820 / NBRC 100138 / K1).